Here is a 100-residue protein sequence, read N- to C-terminus: ATP-dependent Clp protease adapter protein ClpS (100 aa).

The protein belongs to the ClpS family. In terms of assembly, binds to the N-terminal domain of the chaperone ClpA.

Involved in the modulation of the specificity of the ClpAP-mediated ATP-dependent protein degradation. The chain is ATP-dependent Clp protease adapter protein ClpS from Corynebacterium glutamicum (strain R).